The primary structure comprises 87 residues: Small ribosomal subunit protein bS16 (87 aa).

It belongs to the bacterial ribosomal protein bS16 family.

In Aster yellows witches'-broom phytoplasma (strain AYWB), this protein is Small ribosomal subunit protein bS16.